The following is a 368-amino-acid chain: Cobalt-precorrin-5B C(1)-methyltransferase (368 aa).

Belongs to the CbiD family.

The enzyme catalyses Co-precorrin-5B + S-adenosyl-L-methionine = Co-precorrin-6A + S-adenosyl-L-homocysteine. The protein operates within cofactor biosynthesis; adenosylcobalamin biosynthesis; cob(II)yrinate a,c-diamide from sirohydrochlorin (anaerobic route): step 6/10. In terms of biological role, catalyzes the methylation of C-1 in cobalt-precorrin-5B to form cobalt-precorrin-6A. The polypeptide is Cobalt-precorrin-5B C(1)-methyltransferase (Brucella abortus (strain S19)).